A 183-amino-acid chain; its full sequence is MIVGLIGVVEKISALEAHIEVQGVVYGVQVSMRTAALLQTGQKARLKILQVIKEDAHLLYGFLEESEKILFERLLKINGVGGRIALAILSSFSPNEFENIIATKEVKRLQQVPGIGKKLADKIMVDLIGFFIQDENRPARNEVFLALESLGFKSAEINPVLKTLKPHLSIEAAIKEALQQLRS.

Positions 1 to 63 (MIVGLIGVVE…EDAHLLYGFL (63 aa)) are domain I. Residues 64–139 (EESEKILFER…FFIQDENRPA (76 aa)) form a domain II region. A region of interest (flexible linker) is located at residue alanine 139. A domain III region spans residues 139 to 183 (ARNEVFLALESLGFKSAEINPVLKTLKPHLSIEAAIKEALQQLRS).

The protein belongs to the RuvA family. Homotetramer. Forms an RuvA(8)-RuvB(12)-Holliday junction (HJ) complex. HJ DNA is sandwiched between 2 RuvA tetramers; dsDNA enters through RuvA and exits via RuvB. An RuvB hexamer assembles on each DNA strand where it exits the tetramer. Each RuvB hexamer is contacted by two RuvA subunits (via domain III) on 2 adjacent RuvB subunits; this complex drives branch migration. In the full resolvosome a probable DNA-RuvA(4)-RuvB(12)-RuvC(2) complex forms which resolves the HJ.

The protein localises to the cytoplasm. Functionally, the RuvA-RuvB-RuvC complex processes Holliday junction (HJ) DNA during genetic recombination and DNA repair, while the RuvA-RuvB complex plays an important role in the rescue of blocked DNA replication forks via replication fork reversal (RFR). RuvA specifically binds to HJ cruciform DNA, conferring on it an open structure. The RuvB hexamer acts as an ATP-dependent pump, pulling dsDNA into and through the RuvAB complex. HJ branch migration allows RuvC to scan DNA until it finds its consensus sequence, where it cleaves and resolves the cruciform DNA. The polypeptide is Holliday junction branch migration complex subunit RuvA (Helicobacter pylori (strain J99 / ATCC 700824) (Campylobacter pylori J99)).